The following is a 282-amino-acid chain: ATP synthase gamma chain (282 aa).

Belongs to the ATPase gamma chain family. F-type ATPases have 2 components, CF(1) - the catalytic core - and CF(0) - the membrane proton channel. CF(1) has five subunits: alpha(3), beta(3), gamma(1), delta(1), epsilon(1). CF(0) has three main subunits: a, b and c.

Its subcellular location is the cell membrane. Functionally, produces ATP from ADP in the presence of a proton gradient across the membrane. The gamma chain is believed to be important in regulating ATPase activity and the flow of protons through the CF(0) complex. The polypeptide is ATP synthase gamma chain (Clostridium botulinum (strain ATCC 19397 / Type A)).